Reading from the N-terminus, the 160-residue chain is Cytochrome b6-f complex subunit 4 (160 aa).

A run of 3 helical transmembrane segments spans residues 36–56 (LLYI…GLAV), 95–115 (LLGV…PFLE), and 131–151 (TIFL…ALPI).

Belongs to the cytochrome b family. PetD subfamily. In terms of assembly, the 4 large subunits of the cytochrome b6-f complex are cytochrome b6, subunit IV (17 kDa polypeptide, petD), cytochrome f and the Rieske protein, while the 4 small subunits are petG, petL, petM and petN. The complex functions as a dimer.

It is found in the plastid. It localises to the chloroplast thylakoid membrane. Component of the cytochrome b6-f complex, which mediates electron transfer between photosystem II (PSII) and photosystem I (PSI), cyclic electron flow around PSI, and state transitions. The chain is Cytochrome b6-f complex subunit 4 from Anthoceros angustus (Hornwort).